Consider the following 285-residue polypeptide: Ribose-phosphate pyrophosphokinase (285 aa).

ATP-binding positions include 34 to 36 (DGE) and 91 to 92 (RQ). Mg(2+)-binding residues include histidine 124 and aspartate 162. Lysine 185 is an active-site residue. D-ribose 5-phosphate is bound by residues arginine 187, aspartate 211, and 215–219 (STGGT).

This sequence belongs to the ribose-phosphate pyrophosphokinase family. Class III (archaeal) subfamily. Mg(2+) is required as a cofactor.

It is found in the cytoplasm. It catalyses the reaction D-ribose 5-phosphate + ATP = 5-phospho-alpha-D-ribose 1-diphosphate + AMP + H(+). Its pathway is metabolic intermediate biosynthesis; 5-phospho-alpha-D-ribose 1-diphosphate biosynthesis; 5-phospho-alpha-D-ribose 1-diphosphate from D-ribose 5-phosphate (route I): step 1/1. Functionally, involved in the biosynthesis of the central metabolite phospho-alpha-D-ribosyl-1-pyrophosphate (PRPP) via the transfer of pyrophosphoryl group from ATP to 1-hydroxyl of ribose-5-phosphate (Rib-5-P). The polypeptide is Ribose-phosphate pyrophosphokinase (Pyrococcus abyssi (strain GE5 / Orsay)).